Consider the following 217-residue polypeptide: Large ribosomal subunit protein uL29m (217 aa).

Belongs to the universal ribosomal protein uL29 family. Component of the mitochondrial large ribosomal subunit. Mature mitochondrial ribosomes consist of a small (37S) and a large (54S) subunit. The 37S subunit contains at least 33 different proteins and 1 molecule of RNA (15S). The 54S subunit contains at least 45 different proteins and 1 molecule of RNA (21S).

The protein localises to the mitochondrion. This chain is Large ribosomal subunit protein uL29m (mrpl4), found in Aspergillus fumigatus (strain ATCC MYA-4609 / CBS 101355 / FGSC A1100 / Af293) (Neosartorya fumigata).